The following is a 743-amino-acid chain: FHF complex subunit HOOK-interacting protein 2B (743 aa).

The tract at residues 186–219 is disordered; the sequence is CGEPTALPKDTTSHGDKDCSHDGAPARPQLDGES. Basic and acidic residues predominate over residues 196 to 206; it reads TTSHGDKDCSH.

Belongs to the FHIP family. Expressed in liver.

Its function is as follows. Able to activate MAPK/ERK and TGFB signaling pathways. May regulate the activity of genes involved in intestinal barrier function and immunoprotective inflammation. May play a role in cell proliferation. The sequence is that of FHF complex subunit HOOK-interacting protein 2B from Homo sapiens (Human).